Here is a 178-residue protein sequence, read N- to C-terminus: Ribosome maturation factor RimM (178 aa).

In terms of domain architecture, PRC barrel spans 94 to 174; sequence KNEFFWFDLI…RIDVINSFDI (81 aa).

It belongs to the RimM family. In terms of assembly, binds ribosomal protein uS19.

The protein resides in the cytoplasm. Its function is as follows. An accessory protein needed during the final step in the assembly of 30S ribosomal subunit, possibly for assembly of the head region. Essential for efficient processing of 16S rRNA. May be needed both before and after RbfA during the maturation of 16S rRNA. It has affinity for free ribosomal 30S subunits but not for 70S ribosomes. The polypeptide is Ribosome maturation factor RimM (Aliarcobacter butzleri (strain RM4018) (Arcobacter butzleri)).